The sequence spans 400 residues: 1-deoxy-D-xylulose 5-phosphate reductoisomerase (400 aa).

NADPH contacts are provided by threonine 17, glycine 18, serine 19, isoleucine 20, and asparagine 131. Lysine 132 lines the 1-deoxy-D-xylulose 5-phosphate pocket. Glutamate 133 provides a ligand contact to NADPH. Aspartate 157 lines the Mn(2+) pocket. Residues serine 158, glutamate 159, serine 188, and histidine 211 each contribute to the 1-deoxy-D-xylulose 5-phosphate site. Glutamate 159 serves as a coordination point for Mn(2+). Residue glycine 217 participates in NADPH binding. 1-deoxy-D-xylulose 5-phosphate is bound by residues serine 224, asparagine 229, lysine 230, and glutamate 233. Glutamate 233 is a binding site for Mn(2+).

Belongs to the DXR family. The cofactor is Mg(2+). Mn(2+) is required as a cofactor.

The catalysed reaction is 2-C-methyl-D-erythritol 4-phosphate + NADP(+) = 1-deoxy-D-xylulose 5-phosphate + NADPH + H(+). It participates in isoprenoid biosynthesis; isopentenyl diphosphate biosynthesis via DXP pathway; isopentenyl diphosphate from 1-deoxy-D-xylulose 5-phosphate: step 1/6. Its function is as follows. Catalyzes the NADPH-dependent rearrangement and reduction of 1-deoxy-D-xylulose-5-phosphate (DXP) to 2-C-methyl-D-erythritol 4-phosphate (MEP). The protein is 1-deoxy-D-xylulose 5-phosphate reductoisomerase of Pseudomonas putida (strain ATCC 700007 / DSM 6899 / JCM 31910 / BCRC 17059 / LMG 24140 / F1).